A 161-amino-acid polypeptide reads, in one-letter code: Lipid droplet assembly factor 1 (161 aa).

The Cytoplasmic segment spans residues 1-43 (MAEEEPSSVSRDLQELQRKLGLLLESFQNNSKVVAFMKSPVGR). A helical membrane pass occupies residues 44–61 (FLDRHPFLVLTVLMFVTM). Residues 62–67 (SAIPVG) lie on the Lumenal side of the membrane. The helical transmembrane segment at 68–87 (FFLLIVVLTSLGALMGAILL) threads the bilayer. At 88–93 (EGLVIS) the chain is on the cytoplasmic side. The helical transmembrane segment at 94–110 (VCGLSLLCILCGLGFVS) threads the bilayer. The Lumenal portion of the chain corresponds to 111 to 116 (LALSGI). A helical transmembrane segment spans residues 117 to 133 (TMMSYVVVSCLMSYWFS). Over 134–161 (PSRPPTQQHANIDSQLAMKFTESEKLGL) the chain is Cytoplasmic.

This sequence belongs to the LDAF1 family. In terms of assembly, interacts with BSCL2/seipin to form an oligomeric complex.

It localises to the endoplasmic reticulum membrane. Its subcellular location is the lipid droplet. Plays an important role in the formation of lipid droplets (LD) which are storage organelles at the center of lipid and energy homeostasis. In association with BSCL2/seipin, defines the sites of LD formation in the endoplasmic reticulum. The polypeptide is Lipid droplet assembly factor 1 (Rattus norvegicus (Rat)).